We begin with the raw amino-acid sequence, 139 residues long: Large-conductance mechanosensitive channel (139 aa).

The next 3 helical transmembrane spans lie at 19–39 (VGVIIGAAFGGIVSSMVADII), 40–60 (MPIVGAVTGGLDFSNYFLPLS), and 81–101 (GNFLTLTLNFLIVAFVLFMVI).

This sequence belongs to the MscL family. In terms of assembly, homopentamer.

Its subcellular location is the cell inner membrane. Its function is as follows. Channel that opens in response to stretch forces in the membrane lipid bilayer. May participate in the regulation of osmotic pressure changes within the cell. This chain is Large-conductance mechanosensitive channel, found in Nitrobacter winogradskyi (strain ATCC 25391 / DSM 10237 / CIP 104748 / NCIMB 11846 / Nb-255).